Here is a 156-residue protein sequence, read N- to C-terminus: 6,7-dimethyl-8-ribityllumazine synthase (156 aa).

Residues Phe-22, 57–59, and 81–83 contribute to the 5-amino-6-(D-ribitylamino)uracil site; these read AVE and CVI. 86-87 provides a ligand contact to (2S)-2-hydroxy-3-oxobutyl phosphate; it reads GT. Catalysis depends on His-89, which acts as the Proton donor. Phe-114 is a 5-amino-6-(D-ribitylamino)uracil binding site. Arg-128 contributes to the (2S)-2-hydroxy-3-oxobutyl phosphate binding site.

Belongs to the DMRL synthase family. Forms an icosahedral capsid composed of 60 subunits, arranged as a dodecamer of pentamers.

It catalyses the reaction (2S)-2-hydroxy-3-oxobutyl phosphate + 5-amino-6-(D-ribitylamino)uracil = 6,7-dimethyl-8-(1-D-ribityl)lumazine + phosphate + 2 H2O + H(+). Its pathway is cofactor biosynthesis; riboflavin biosynthesis; riboflavin from 2-hydroxy-3-oxobutyl phosphate and 5-amino-6-(D-ribitylamino)uracil: step 1/2. Catalyzes the formation of 6,7-dimethyl-8-ribityllumazine by condensation of 5-amino-6-(D-ribitylamino)uracil with 3,4-dihydroxy-2-butanone 4-phosphate. This is the penultimate step in the biosynthesis of riboflavin. The chain is 6,7-dimethyl-8-ribityllumazine synthase from Vibrio cholerae serotype O1 (strain ATCC 39315 / El Tor Inaba N16961).